The following is a 404-amino-acid chain: Cysteine desulfurase IscS (404 aa).

Pyridoxal 5'-phosphate contacts are provided by residues 75 to 76 (AT), N155, Q183, and 203 to 205 (SGH). Position 206 is an N6-(pyridoxal phosphate)lysine (K206). T243 contacts pyridoxal 5'-phosphate. The Cysteine persulfide intermediate role is filled by C328. A [2Fe-2S] cluster-binding site is contributed by C328.

It belongs to the class-V pyridoxal-phosphate-dependent aminotransferase family. NifS/IscS subfamily. In terms of assembly, homodimer. Forms a heterotetramer with IscU, interacts with other sulfur acceptors. It depends on pyridoxal 5'-phosphate as a cofactor.

The protein resides in the cytoplasm. It carries out the reaction (sulfur carrier)-H + L-cysteine = (sulfur carrier)-SH + L-alanine. It participates in cofactor biosynthesis; iron-sulfur cluster biosynthesis. In terms of biological role, master enzyme that delivers sulfur to a number of partners involved in Fe-S cluster assembly, tRNA modification or cofactor biosynthesis. Catalyzes the removal of elemental sulfur atoms from cysteine to produce alanine. Functions as a sulfur delivery protein for Fe-S cluster synthesis onto IscU, an Fe-S scaffold assembly protein, as well as other S acceptor proteins. The polypeptide is Cysteine desulfurase IscS (Klebsiella pneumoniae (strain 342)).